The chain runs to 249 residues: 1-(5-phosphoribosyl)-5-[(5-phosphoribosylamino)methylideneamino] imidazole-4-carboxamide isomerase (249 aa).

Asp-8 (proton acceptor) is an active-site residue. Asp-130 functions as the Proton donor in the catalytic mechanism.

It belongs to the HisA/HisF family.

The protein localises to the cytoplasm. The catalysed reaction is 1-(5-phospho-beta-D-ribosyl)-5-[(5-phospho-beta-D-ribosylamino)methylideneamino]imidazole-4-carboxamide = 5-[(5-phospho-1-deoxy-D-ribulos-1-ylimino)methylamino]-1-(5-phospho-beta-D-ribosyl)imidazole-4-carboxamide. The protein operates within amino-acid biosynthesis; L-histidine biosynthesis; L-histidine from 5-phospho-alpha-D-ribose 1-diphosphate: step 4/9. The sequence is that of 1-(5-phosphoribosyl)-5-[(5-phosphoribosylamino)methylideneamino] imidazole-4-carboxamide isomerase from Chromohalobacter salexigens (strain ATCC BAA-138 / DSM 3043 / CIP 106854 / NCIMB 13768 / 1H11).